A 400-amino-acid chain; its full sequence is TBC1 domain family member 13 (400 aa).

A Rab-GAP TBC domain is found at 35-345 (PCEGGLRCLC…RIWDSLFADD (311 aa)).

As to quaternary structure, interacts with RAB1A and RAB10; in a GTP-dependent manner.

The protein resides in the membrane. Its subcellular location is the cytoplasm. Functionally, acts as a GTPase-activating protein for RAB35. Together with RAB35 may be involved in regulation of insulin-induced glucose transporter SLC2A4/GLUT4 translocation to the plasma membrane in adipocytes. This chain is TBC1 domain family member 13 (TBC1D13), found in Homo sapiens (Human).